The sequence spans 312 residues: MHQPVMLEETIAMLKPHAKGRYLDGTVGLGGHSFAILQSAGDGAELCGLDQDKKALAIAEMTLKPFKKRVHLVHTKYSSFPLILKALGWKLLDGALIDIGVSSLQLDNAERGFSFLYDGPLDMRMDQDANNNSLFEIVNKSRQEYLKDIISRYGEEPQANRIAKAIVQKRRTKPITTTKELADLIEQAYPAAWRAKSRHHPATKTFQAFRIVVNSELNELEKFLNMIMGWIAPGGRVAVISFHSLEDRIVKQYMKSWTRSCICPPYVPVCKCFHKPEAILITKKPIRPSEKEISENIRSRSAKLRVAEKVLL.

S-adenosyl-L-methionine contacts are provided by residues 30 to 32 (GGH), Asp50, Phe80, Asp98, and Gln105.

It belongs to the methyltransferase superfamily. RsmH family.

It localises to the cytoplasm. It catalyses the reaction cytidine(1402) in 16S rRNA + S-adenosyl-L-methionine = N(4)-methylcytidine(1402) in 16S rRNA + S-adenosyl-L-homocysteine + H(+). Its function is as follows. Specifically methylates the N4 position of cytidine in position 1402 (C1402) of 16S rRNA. This Lawsonia intracellularis (strain PHE/MN1-00) protein is Ribosomal RNA small subunit methyltransferase H.